We begin with the raw amino-acid sequence, 191 residues long: GDP-mannose pyrophosphatase (191 aa).

Residues Y17, 38-40 (KRE), R67, and 85-87 (AGL) contribute to the GDP-alpha-D-mannose site. One can recognise a Nudix hydrolase domain in the interval 43-180 (DRGNGATILL…EIRDGKTVLL (138 aa)). Residues A85, E100, and E104 each contribute to the Mg(2+) site. A Nudix box motif is present at residues 86-106 (GLLDNDEPEVCIRKEAIEETG). Residues E104, E127, 150-151 (DE), and K176 contribute to the GDP-alpha-D-mannose site. Residue E151 coordinates Mg(2+).

This sequence belongs to the Nudix hydrolase family. NudK subfamily. As to quaternary structure, homodimer. Requires Mg(2+) as cofactor.

The enzyme catalyses GDP-alpha-D-mannose + H2O = alpha-D-mannose 1-phosphate + GMP + 2 H(+). Nucleoside diphosphate sugar hydrolase that hydrolyzes GDP-mannose as its preferred substrate, yielding GMP and mannose-1-phosphate. This chain is GDP-mannose pyrophosphatase (nudK), found in Salmonella typhi.